Here is a 74-residue protein sequence, read N- to C-terminus: Defensin Lc-def (74 aa).

A signal peptide spans 1-27 (MEKKTVAALSFLFIVLFVAQEIAVTEA). Intrachain disulfides connect C30/C74, C41/C62, C47/C68, and C51/C70.

Its subcellular location is the secreted. In terms of biological role, has antifungal activity against the phytopathogenic fungus A.niger VKM F-2259, but not against A.alternata VKM F-3047. Does not inhibit trypsin or chymotrypsin. In Lens culinaris subsp. culinaris (Cultivated lentil), this protein is Defensin Lc-def.